The chain runs to 198 residues: Charged multivesicular body protein 1a (198 aa).

Coiled-coil stretches lie at residues 7–41 (QLKF…QQKN) and 176–198 (GETS…ALRN). The disordered stretch occupies residues 171 to 198 (GASALGETSARAQEKEDQLSRRLAALRN). Positions 187-197 (DQLSRRLAALR) match the MIT-interacting motif motif.

This sequence belongs to the SNF7 family. Probable peripherally associated component of the endosomal sorting required for transport complex III (ESCRT-III).

The protein localises to the cytoplasm. It localises to the endosome membrane. Probable peripherally associated component of the endosomal sorting required for transport complex III (ESCRT-III) which is involved in multivesicular bodies (MVBs) formation and sorting of endosomal cargo proteins into MVBs. MVBs contain intraluminal vesicles (ILVs) that are generated by invagination and scission from the limiting membrane of the endosome and mostly are delivered to lysosomes enabling degradation of membrane proteins, such as stimulated growth factor receptors, lysosomal enzymes and lipids. This is Charged multivesicular body protein 1a (chmp1a) from Danio rerio (Zebrafish).